We begin with the raw amino-acid sequence, 283 residues long: Pantothenate synthetase (283 aa).

30–37 (MGNLHAGH) serves as a coordination point for ATP. Residue H37 is the Proton donor of the active site. Residue Q61 participates in (R)-pantoate binding. Q61 provides a ligand contact to beta-alanine. An ATP-binding site is contributed by 149–152 (GEKD). Q155 is a (R)-pantoate binding site. Residues L178 and 186–189 (MSSR) contribute to the ATP site.

The protein belongs to the pantothenate synthetase family. As to quaternary structure, homodimer.

The protein resides in the cytoplasm. It catalyses the reaction (R)-pantoate + beta-alanine + ATP = (R)-pantothenate + AMP + diphosphate + H(+). Its pathway is cofactor biosynthesis; (R)-pantothenate biosynthesis; (R)-pantothenate from (R)-pantoate and beta-alanine: step 1/1. Catalyzes the condensation of pantoate with beta-alanine in an ATP-dependent reaction via a pantoyl-adenylate intermediate. This chain is Pantothenate synthetase, found in Hahella chejuensis (strain KCTC 2396).